A 524-amino-acid chain; its full sequence is Inorganic phosphate transporter 1-1 (524 aa).

Residues 1–24 (MAEQQLGVLKALDVAKTQLYHFTA) lie on the Cytoplasmic side of the membrane. Residues 25–45 (IVIAGMGFFTDAYDLFCVSLV) traverse the membrane as a helical segment. Residues 46–70 (TKLLGRIYYFNPESAKPGSLPPHVA) lie on the Extracellular side of the membrane. A helical membrane pass occupies residues 71–91 (AAVNGVALCGTLSGQLFFGWL). Topologically, residues 92 to 99 (GDKLGRKK) are cytoplasmic. Residues 100 to 120 (VYGLTLVMMILCSVASGLSFG) traverse the membrane as a helical segment. At 121 to 131 (HEAKGVMTTLC) the chain is on the extracellular side. The helical transmembrane segment at 132–152 (FFRFWLGFGIGGDYPLSATIM) threads the bilayer. The Cytoplasmic segment spans residues 153–161 (SEYANKKTR). The chain crosses the membrane as a helical span at residues 162-182 (GAFIAAVFAMQGVGILAGGFV). The Extracellular portion of the chain corresponds to 183–211 (ALAVSSIFDKKFPAPTYAVNRALSTPPQV). Residues 212-232 (DYIWRIIVMFGALPAALTYYW) form a helical membrane-spanning segment. Residues 233-292 (RMKMPETARYTALVAKNIKQATADMSKVLQTDIELEERVEDDVKDPKQNYGLFSKEFLRR) lie on the Cytoplasmic side of the membrane. Residues 293–313 (HGLHLLGTTSTWFLLDIAFYS) form a helical membrane-spanning segment. Topologically, residues 314–348 (QNLFQKDIFSAIGWIPKAATMNATHEVFRIARAQT) are extracellular. Residues 349–369 (LIALCSTVPGYWFTVAFIDTI) form a helical membrane-spanning segment. The Cytoplasmic portion of the chain corresponds to 370–371 (GR). The chain crosses the membrane as a helical span at residues 372-392 (FKIQLNGFFMMTVFMFAIAFP). Residues 393–402 (YNHWIKPENR) lie on the Extracellular side of the membrane. Residues 403 to 423 (IGFVVMYSLTFFFANFGPNAT) traverse the membrane as a helical segment. Over 424–441 (TFIVPAEIFPARLRSTCH) the chain is Cytoplasmic. A helical membrane pass occupies residues 442–462 (GISAAAGKAGAIVGAFGFLYA). At 463-484 (AQSQDKAKVDAGYPPGIGVKNS) the chain is on the extracellular side. Residues 485–505 (LIMLGVLNFIGMLFTFLVPEP) traverse the membrane as a helical segment. Topologically, residues 506–524 (KGKSLEELSGEAEVSHDEK) are cytoplasmic.

This sequence belongs to the major facilitator superfamily. Phosphate:H(+) symporter (TC 2.A.1.9) family. In terms of assembly, interacts with NLA. Post-translationally, ubiquitinated by NLA. Ubiquitination of PHT1-1 leads to its degradation by the proteasome. As to expression, mostly expressed in roots, especially in trichoblasts and in emerging secondary roots and root hairs, but not in root tips. Also present in hydathodes, axillary buds and peripheral endosperm of germinating seeds.

It is found in the cell membrane. With respect to regulation, inhibited by protonophores (e.g. 2,4-dinitrophenol and carbonylcyanide m-chlorophenylhydrazone), the plasma membrane H(+)-ATPase inhibitor diethylstilbestorol, and the phosphate analog arsenate. Its function is as follows. High-affinity transporter for external inorganic phosphate. Acts as a H(+):phosphate symporter in both low- and high-Pi conditions. Confers sensitivity to arsenate. This Arabidopsis thaliana (Mouse-ear cress) protein is Inorganic phosphate transporter 1-1 (PHT1-1).